The following is a 615-amino-acid chain: 1-deoxy-D-xylulose-5-phosphate synthase (615 aa).

Thiamine diphosphate is bound by residues histidine 72 and 113-115 (GHA). A Mg(2+)-binding site is contributed by aspartate 144. Thiamine diphosphate-binding positions include 145–146 (GA), asparagine 173, tyrosine 281, and glutamate 360. Asparagine 173 is a binding site for Mg(2+).

It belongs to the transketolase family. DXPS subfamily. In terms of assembly, homodimer. It depends on Mg(2+) as a cofactor. Thiamine diphosphate serves as cofactor.

It carries out the reaction D-glyceraldehyde 3-phosphate + pyruvate + H(+) = 1-deoxy-D-xylulose 5-phosphate + CO2. The protein operates within metabolic intermediate biosynthesis; 1-deoxy-D-xylulose 5-phosphate biosynthesis; 1-deoxy-D-xylulose 5-phosphate from D-glyceraldehyde 3-phosphate and pyruvate: step 1/1. Functionally, catalyzes the acyloin condensation reaction between C atoms 2 and 3 of pyruvate and glyceraldehyde 3-phosphate to yield 1-deoxy-D-xylulose-5-phosphate (DXP). The polypeptide is 1-deoxy-D-xylulose-5-phosphate synthase (Thermus thermophilus (strain ATCC 27634 / DSM 579 / HB8)).